A 558-amino-acid chain; its full sequence is Aspartate--tRNA ligase 2, cytoplasmic (558 aa).

Residues 1-18 (MSSESEIPPLSSSTAAAE) show a composition bias toward low complexity. Residues 1-57 (MSSESEIPPLSSSTAAAEESGEKTSKKAAKKEAAKLEKLRRRQEQEEATRRTASISL) are disordered. At Ser-2 the chain carries N-acetylserine. Basic and acidic residues predominate over residues 20 to 50 (SGEKTSKKAAKKEAAKLEKLRRRQEQEEATR). Residues 110–195 (VLIRGRVHTN…QVEIQVRKVY (86 aa)) constitute a DNA-binding region (OB). Glu-286 is a binding site for L-aspartate. The tract at residues 308–311 (QLHK) is aspartate. Arg-330 provides a ligand contact to L-aspartate. ATP-binding positions include 330 to 332 (RAE), 338 to 340 (RHL), and Glu-481. Residues Glu-481 and Ser-484 each contribute to the Mg(2+) site. L-aspartate-binding residues include Ser-484 and Arg-488. 529–532 (GLER) is an ATP binding site.

It belongs to the class-II aminoacyl-tRNA synthetase family. Type 2 subfamily.

It is found in the cytoplasm. The protein localises to the cytosol. Its subcellular location is the endoplasmic reticulum. The catalysed reaction is tRNA(Asp) + L-aspartate + ATP = L-aspartyl-tRNA(Asp) + AMP + diphosphate. Catalyzes the specific attachment of an amino acid to its cognate tRNA in a 2 step reaction: the amino acid (AA) is first activated by ATP to form AA-AMP and then transferred to the acceptor end of the tRNA. Involved in the perception of beta-aminobutyric acid (BABA) and required for BABA priming effect in disease resistance. The sequence is that of Aspartate--tRNA ligase 2, cytoplasmic from Arabidopsis thaliana (Mouse-ear cress).